Reading from the N-terminus, the 422-residue chain is Lipase member M (422 aa).

The N-terminal stretch at Met-1 to Ser-33 is a signal peptide. An N-linked (GlcNAc...) asparagine glycan is attached at Asn-48. The 301-residue stretch at Pro-92–Gly-392 folds into the AB hydrolase-1 domain. Residue Ser-186 is the Nucleophile of the active site. Cys-260 and Cys-269 form a disulfide bridge. Active-site charge relay system residues include Asp-357 and His-386.

It belongs to the AB hydrolase superfamily. Lipase family.

The protein localises to the secreted. In terms of biological role, plays a highly specific role in the last step of keratinocyte differentiation. May have an essential function in lipid metabolism of the most differentiated epidermal layers. This is Lipase member M (Lipm) from Mus musculus (Mouse).